Reading from the N-terminus, the 453-residue chain is MDRRIFGLETEFGVTCAFEGQRKLSPDEVARYLFRKVVSWGRSSNVFLKNGARLYLDVGSHPEYATPECDDVRQLVVHDRAGERTLEGLLTDAERRLEEEGIAGEVFLFKNNTDSAGNSYGCHENYLVSRHGEFGKLSDVLIPFLVSRQLIVGAGKVVQTPRGAVYSLSQRADHIWEGVSSATTRSRPIINTRDEPHADAERYRRLHVIVGDSNMSETTTMLKLGATDLVLRMVEEGVVLREMTMENPIRAIREISHDMTGRKPVRLANGREASALEIQEEYLEKAKEFVESRGLQTPTIKRVLDLWERALRAVATQDFSLVDREVDWVIKKKLLDRYMAKHDLPLTSPRIARLDLAYHDIHRKRGLHYMLAERGMAERVCSDIEVFEALSVPPQTTRAKLRGDFVRAAQEKRRDFTVDWVHLKLNDQAQRTVLCKDPFKAVDDRVERLIDSM.

E9 contacts Mg(2+). R53 contributes to the ATP binding site. Y55 lines the Mg(2+) pocket. Residue D57 is the Proton acceptor of the active site. Position 63 (E63) interacts with Mg(2+). 2 residues coordinate ATP: T66 and W420.

This sequence belongs to the Pup ligase/Pup deamidase family. Pup-conjugating enzyme subfamily.

The catalysed reaction is ATP + [prokaryotic ubiquitin-like protein]-L-glutamate + [protein]-L-lysine = ADP + phosphate + N(6)-([prokaryotic ubiquitin-like protein]-gamma-L-glutamyl)-[protein]-L-lysine.. It functions in the pathway protein degradation; proteasomal Pup-dependent pathway. It participates in protein modification; protein pupylation. In terms of biological role, catalyzes the covalent attachment of the prokaryotic ubiquitin-like protein modifier Pup to the proteasomal substrate proteins, thereby targeting them for proteasomal degradation. This tagging system is termed pupylation. The ligation reaction involves the side-chain carboxylate of the C-terminal glutamate of Pup and the side-chain amino group of a substrate lysine. The chain is Pup--protein ligase from Kineococcus radiotolerans (strain ATCC BAA-149 / DSM 14245 / SRS30216).